A 343-amino-acid chain; its full sequence is Multidrug resistance protein MdtN (343 aa).

Residues 1-12 (MESTPKKAPRSK) are Cytoplasmic-facing. The helical; Signal-anchor for type II membrane protein transmembrane segment at 13 to 33 (FPALLVVALALVALVFVIWRV) threads the bilayer. Residues 34 to 343 (DSAPSTNDAY…ASAVANLEPQ (310 aa)) are Periplasmic-facing.

The protein belongs to the membrane fusion protein (MFP) (TC 8.A.1) family. In terms of assembly, could be part of a tripartite efflux system composed of MdtN, MdtO and MdtP.

Its subcellular location is the cell inner membrane. In terms of biological role, could be involved in resistance to puromycin, acriflavine and tetraphenylarsonium chloride. The chain is Multidrug resistance protein MdtN (mdtN) from Escherichia coli (strain K12).